The sequence spans 64 residues: DNA gyrase inhibitor YacG (64 aa).

Zn(2+) is bound by residues C9, C12, C28, and C32. The interval 42–64 (DEENAIPGAPDMSDSDGWSEEQY) is disordered. A compositionally biased stretch (acidic residues) spans 54 to 64 (SDSDGWSEEQY).

The protein belongs to the DNA gyrase inhibitor YacG family. Interacts with GyrB. Requires Zn(2+) as cofactor.

In terms of biological role, inhibits all the catalytic activities of DNA gyrase by preventing its interaction with DNA. Acts by binding directly to the C-terminal domain of GyrB, which probably disrupts DNA binding by the gyrase. This Vibrio vulnificus (strain YJ016) protein is DNA gyrase inhibitor YacG.